Consider the following 149-residue polypeptide: Deoxyuridine 5'-triphosphate nucleotidohydrolase (149 aa).

Substrate-binding positions include 68-70 (RSG), N81, 85-87 (LID), and M95.

It belongs to the dUTPase family. Requires Mg(2+) as cofactor.

The catalysed reaction is dUTP + H2O = dUMP + diphosphate + H(+). The protein operates within pyrimidine metabolism; dUMP biosynthesis; dUMP from dCTP (dUTP route): step 2/2. In terms of biological role, this enzyme is involved in nucleotide metabolism: it produces dUMP, the immediate precursor of thymidine nucleotides and it decreases the intracellular concentration of dUTP so that uracil cannot be incorporated into DNA. This Polynucleobacter asymbioticus (strain DSM 18221 / CIP 109841 / QLW-P1DMWA-1) (Polynucleobacter necessarius subsp. asymbioticus) protein is Deoxyuridine 5'-triphosphate nucleotidohydrolase.